The primary structure comprises 111 residues: Phosphoribosyl-ATP pyrophosphatase (111 aa).

This sequence belongs to the PRA-PH family.

It localises to the cytoplasm. It catalyses the reaction 1-(5-phospho-beta-D-ribosyl)-ATP + H2O = 1-(5-phospho-beta-D-ribosyl)-5'-AMP + diphosphate + H(+). The protein operates within amino-acid biosynthesis; L-histidine biosynthesis; L-histidine from 5-phospho-alpha-D-ribose 1-diphosphate: step 2/9. This is Phosphoribosyl-ATP pyrophosphatase from Azotobacter vinelandii (strain DJ / ATCC BAA-1303).